The following is a 519-amino-acid chain: Cyclin-dependent kinase C-1 (519 aa).

The region spanning 25–325 is the Protein kinase domain; that stretch reads FEKLEQIGEG…AQDALDAEYF (301 aa). ATP contacts are provided by residues 31–39 and K54; that span reads IGEGTYGQV. T35 is subject to Phosphothreonine. A Phosphotyrosine modification is found at Y36. D164 (proton acceptor) is an active-site residue. Residue T198 is modified to Phosphothreonine. Residues 336-348 show a composition bias toward basic and acidic residues; sequence SLPKYESSHEFQT. The interval 336–519 is disordered; that stretch reads SLPKYESSHE…RNQQQYGNWQ (184 aa). Gly residues predominate over residues 426-444; the sequence is GNQGGGYPNRGGQGGGGSY. The span at 445 to 454 shows a compositional bias: low complexity; it reads GNAPYPQQGR. 2 stretches are compositionally biased toward gly residues: residues 464–483 and 490–499; these read GMAG…GGGS and GPYGPSGPGR. A compositionally biased stretch (polar residues) spans 505–519; that stretch reads QQGGSRNQQQYGNWQ.

The protein belongs to the protein kinase superfamily. CMGC Ser/Thr protein kinase family. CDC2/CDKX subfamily.

It carries out the reaction L-seryl-[protein] + ATP = O-phospho-L-seryl-[protein] + ADP + H(+). The enzyme catalyses L-threonyl-[protein] + ATP = O-phospho-L-threonyl-[protein] + ADP + H(+). It catalyses the reaction [DNA-directed RNA polymerase] + ATP = phospho-[DNA-directed RNA polymerase] + ADP + H(+). The sequence is that of Cyclin-dependent kinase C-1 (CDKC-1) from Oryza sativa subsp. japonica (Rice).